We begin with the raw amino-acid sequence, 622 residues long: Microtubule-associated protein 70-1 (622 aa).

Positions 1-27 (MSDVSADGGFLSAEQATTPVAIPTPYP) are disordered. A coiled-coil region spans residues 66-365 (DPVKVELNRL…LAISDRAAKS (300 aa)). A required for targeting to microtubules region spans residues 250-483 (ILDRMHRQKV…YSFNKACDET (234 aa)). Disordered stretches follow at residues 388–512 (SSIS…TEDN) and 579–622 (AAMR…RSTQ). Polar residues-rich tracts occupy residues 400–425 (SMSN…SNGF) and 432–453 (MRNS…TSKS). Basic and acidic residues-rich tracts occupy residues 479–501 (ACDE…EKPP) and 579–591 (AAMR…DNRA). Residues 541–590 (DKDDAIEMLAKKVETLTKAMEVEAKKMRREVAAMEKEVAAMRVDKDQDNR) adopt a coiled-coil conformation. A compositionally biased stretch (polar residues) spans 594-605 (SSNTKPSSNTAQ).

This sequence belongs to the MAP70 family. In terms of assembly, interacts with MAP70.5 and itself.

It localises to the cytoplasm. The protein resides in the cytoskeleton. Its subcellular location is the phragmoplast. It is found in the spindle. Plant-specific protein that interact with microtubules. In association with MAP70.5, is essential for the normal banding pattern of secondary cell wall and for the proper development of xylem tracheary elements and wood formation. This is Microtubule-associated protein 70-1 (MAP70.1) from Arabidopsis thaliana (Mouse-ear cress).